We begin with the raw amino-acid sequence, 396 residues long: Elongation factor Tu (396 aa).

A tr-type G domain is found at 10 to 205 (KPHVNIGTIG…ACDDNIPDPV (196 aa)). Residues 19–26 (GHVDHGKT) form a G1 region. 19-26 (GHVDHGKT) provides a ligand contact to GTP. Threonine 26 is a binding site for Mg(2+). Positions 62–66 (GITIN) are G2. A G3 region spans residues 83-86 (DAPG). GTP-binding positions include 83-87 (DAPGH) and 138-141 (NKCD). The tract at residues 138-141 (NKCD) is G4. The tract at residues 175 to 177 (SAL) is G5.

This sequence belongs to the TRAFAC class translation factor GTPase superfamily. Classic translation factor GTPase family. EF-Tu/EF-1A subfamily. In terms of assembly, monomer.

It localises to the cytoplasm. The catalysed reaction is GTP + H2O = GDP + phosphate + H(+). In terms of biological role, GTP hydrolase that promotes the GTP-dependent binding of aminoacyl-tRNA to the A-site of ribosomes during protein biosynthesis. The polypeptide is Elongation factor Tu (Corynebacterium efficiens (strain DSM 44549 / YS-314 / AJ 12310 / JCM 11189 / NBRC 100395)).